We begin with the raw amino-acid sequence, 373 residues long: Pulmonary surfactant-associated protein B (373 aa).

The first 22 residues, 1-22 (MAKSHLLPWLLLLPILCGPGTA), serve as a signal peptide directing secretion. Positions 23–187 (AAITYSLACA…PQTQDLSEQL (165 aa)) are excised as a propeptide. In terms of domain architecture, Saposin A-type spans 24–64 (AITYSLACAQGPEFWCQSLEQALQCRALGHCLQEVWGHVEA). Saposin B-type domains lie at 64–146 (ADDL…KPRH), 191–268 (PIPY…SSED), and 287–362 (QDSD…AAPF). 9 disulfides stabilise this stretch: C68/C142, C71/C136, C99/C111, C195/C264, C198/C258, C222/C233, C291/C358, C294/C352, and C317/C327. N73 is a glycosylation site (N-linked (GlcNAc...) asparagine). Positions 267-373 (EDSAGPALPA…PLQCVHSPHF (107 aa)) are excised as a propeptide. N303 carries N-linked (GlcNAc...) asparagine glycosylation.

Homodimer; disulfide-linked.

The protein resides in the secreted. It localises to the extracellular space. Its subcellular location is the surface film. Its function is as follows. Pulmonary surfactant-associated proteins promote alveolar stability by lowering the surface tension at the air-liquid interface in the peripheral air spaces. SP-B increases the collapse pressure of palmitic acid to nearly 70 millinewtons per meter. This is Pulmonary surfactant-associated protein B (SFTPB) from Bos taurus (Bovine).